The primary structure comprises 1068 residues: Protein AF-10 (1068 aa).

The PHD-type 1 zinc finger occupies 22–74 (IGGCCVCSDERGWAENPLVYCDGHGCSVAVHQACYGIVQVPTGPWFCRKCESQ). A C2HC pre-PHD-type zinc finger spans residues 79–112 (RVRCELCPHKDGALKRTDNGGWAHVVCALYIPEV). The interval 80 to 287 (VRCELCPHKD…SLKRLEDTTA (208 aa)) is self-association. The interval 106–190 (ALYIPEVQFA…EGNGADNVQY (85 aa)) is required for interaction with histone H3. Residues 135-198 (KTCYICDEQG…QYCGYCKYHF (64 aa)) form a PHD-type 2 zinc finger. An interaction with FSTL3 region spans residues 141–233 (DEQGRESKAA…QDKHHEKEKK (93 aa)). The interval 206–260 (RGSNRSYDQSLSDSSSHSQDKHHEKEKKKYKEKDKHKQKHKKQPEPSPALVPSLT) is disordered. Residues 211–222 (SYDQSLSDSSSH) are compositionally biased toward low complexity. Serine 217 is modified (phosphoserine). Residues 223–240 (SQDKHHEKEKKKYKEKDK) show a composition bias toward basic and acidic residues. Phosphoserine is present on serine 252. Lysine 280 is covalently cross-linked (Glycyl lysine isopeptide (Lys-Gly) (interchain with G-Cter in SUMO2)). A compositionally biased stretch (polar residues) spans 291 to 305 (NANFQEVSAHTSSGK). Residues 291-505 (NANFQEVSAH…SSASPTSSVA (215 aa)) form a disordered region. A compositionally biased stretch (basic and acidic residues) spans 306–317 (DVSETRGSEGKG). Residues 311–674 (RGSEGKGKKS…QDLGDNSRNL (364 aa)) are DNA-binding. Residues 352–372 (SFSGTPGSVKSSSGSSVQSPQ) are compositionally biased toward low complexity. Composition is skewed to polar residues over residues 387-396 (YSHSQQSSAT) and 404-446 (SGSQ…SSLP). The residue at position 436 (serine 436) is a Phosphoserine. Residues 465–483 (EKKRKGNKQSKHGPGRPKG) are compositionally biased toward basic residues. Residues 490 to 505 (VSHLSVSSASPTSSVA) are compositionally biased toward low complexity. At serine 532 the chain carries Phosphoserine. Positions 583–594 (SGSGSSTPVSSS) are enriched in low complexity. 2 disordered regions span residues 583-612 (SGSG…ALSP) and 660-708 (NNQT…SLEN). Polar residues-rich tracts occupy residues 595-604 (HLPQQSSGHL) and 660-673 (NNQT…NSRN). Residues 674-694 (LVGRGSSPRGSLSPRSPVSSL) are compositionally biased toward low complexity. Phosphoserine occurs at positions 684, 686, and 689. Residues 703–784 (NSSLENLPPV…NAQLSVPFPT (82 aa)) form a transactivation domain; required for DOT1L-binding region. Residues 750-778 (LQVENRRLEEQIKNLTAKKERLQLLNAQL) are leucine-zipper. Over residues 800–814 (AQTAPTTDSLNSSKS) the composition is skewed to polar residues. Residues 800–865 (AQTAPTTDSL…SPAQQGSGVS (66 aa)) are disordered. Composition is skewed to low complexity over residues 834 to 848 (LTSS…SALS) and 855 to 865 (QSPAQQGSGVS).

As to quaternary structure, self-associates. Interacts with FSTL3 isoform 2; the interaction enhances MLLT10 in vitro transcriptional activity and self-association. Interacts with YEATS4. Interacts with SS18. Interacts with DOT1L; this interaction also occurs with the KMT2A/MLL1 fusion protein. Interacts with histone H3; interaction is necessary for MLLT10 binding to nucleosomes; interaction is inhibited by histone H3 'Lys-27' methylations (H3K27me1, H3K27me2 and H3K27me3) amd acetylation; interaction stabilizes association of MLLT10 at chromatin; interaction is essential for histone H3 'Lys-79' dimethylation (H3K79me2). In terms of tissue distribution, expressed abundantly in testis.

The protein localises to the nucleus. Functionally, probably involved in transcriptional regulation. In vitro or as fusion protein with KMT2A/MLL1 has transactivation activity. Binds to cruciform DNA. In cells, binding to unmodified histone H3 regulates DOT1L functions including histone H3 'Lys-79' dimethylation (H3K79me2) and gene activation. In Homo sapiens (Human), this protein is Protein AF-10.